The sequence spans 100 residues: Integration host factor subunit alpha (100 aa).

A disordered region spans residues Phe-53–Ile-72.

It belongs to the bacterial histone-like protein family. In terms of assembly, heterodimer of an alpha and a beta chain.

Functionally, this protein is one of the two subunits of integration host factor, a specific DNA-binding protein that functions in genetic recombination as well as in transcriptional and translational control. The sequence is that of Integration host factor subunit alpha from Stutzerimonas stutzeri (strain A1501) (Pseudomonas stutzeri).